A 266-amino-acid chain; its full sequence is F-actin-capping protein subunit beta (266 aa).

This sequence belongs to the F-actin-capping protein beta subunit family. As to quaternary structure, component of the F-actin capping complex, composed of a heterodimer of an alpha and a beta subunit.

The protein localises to the cytoplasm. It is found in the cytoskeleton. The protein resides in the actin patch. F-actin-capping proteins bind in a Ca(2+)-independent manner to the fast growing ends of actin filaments (barbed end) thereby blocking the exchange of subunits at these ends. Unlike other capping proteins (such as gelsolin and severin), these proteins do not sever actin filaments. This is F-actin-capping protein subunit beta (cap2) from Emericella nidulans (strain FGSC A4 / ATCC 38163 / CBS 112.46 / NRRL 194 / M139) (Aspergillus nidulans).